The sequence spans 436 residues: 3-ketoacyl-CoA thiolase (436 aa).

The Acyl-thioester intermediate role is filled by cysteine 99. Catalysis depends on proton acceptor residues histidine 392 and cysteine 422.

The protein belongs to the thiolase-like superfamily. Thiolase family. As to quaternary structure, heterotetramer of two alpha chains (FadJ) and two beta chains (FadI).

It is found in the cytoplasm. It catalyses the reaction an acyl-CoA + acetyl-CoA = a 3-oxoacyl-CoA + CoA. Its pathway is lipid metabolism; fatty acid beta-oxidation. In terms of biological role, catalyzes the final step of fatty acid oxidation in which acetyl-CoA is released and the CoA ester of a fatty acid two carbons shorter is formed. In Shewanella sediminis (strain HAW-EB3), this protein is 3-ketoacyl-CoA thiolase.